The chain runs to 67 residues: DNA-directed RNA polymerase subunit Rpo10 (67 aa).

4 residues coordinate Zn(2+): Cys-7, Cys-10, Cys-44, and Cys-45.

Belongs to the archaeal Rpo10/eukaryotic RPB10 RNA polymerase subunit family. Part of the RNA polymerase complex. The cofactor is Zn(2+).

The protein resides in the cytoplasm. It carries out the reaction RNA(n) + a ribonucleoside 5'-triphosphate = RNA(n+1) + diphosphate. In terms of biological role, DNA-dependent RNA polymerase (RNAP) catalyzes the transcription of DNA into RNA using the four ribonucleoside triphosphates as substrates. This chain is DNA-directed RNA polymerase subunit Rpo10, found in Caldivirga maquilingensis (strain ATCC 700844 / DSM 13496 / JCM 10307 / IC-167).